We begin with the raw amino-acid sequence, 156 residues long: Ribosomal RNA large subunit methyltransferase H (156 aa).

S-adenosyl-L-methionine-binding positions include Leu-73, Gly-104, and 123-128 (LSPLTL).

This sequence belongs to the RNA methyltransferase RlmH family. Homodimer.

It is found in the cytoplasm. The catalysed reaction is pseudouridine(1915) in 23S rRNA + S-adenosyl-L-methionine = N(3)-methylpseudouridine(1915) in 23S rRNA + S-adenosyl-L-homocysteine + H(+). Functionally, specifically methylates the pseudouridine at position 1915 (m3Psi1915) in 23S rRNA. This is Ribosomal RNA large subunit methyltransferase H from Pectobacterium carotovorum subsp. carotovorum (strain PC1).